An 89-amino-acid polypeptide reads, in one-letter code: Small ribosomal subunit protein uS15 (89 aa).

This sequence belongs to the universal ribosomal protein uS15 family. Part of the 30S ribosomal subunit. Forms a bridge to the 50S subunit in the 70S ribosome, contacting the 23S rRNA.

In terms of biological role, one of the primary rRNA binding proteins, it binds directly to 16S rRNA where it helps nucleate assembly of the platform of the 30S subunit by binding and bridging several RNA helices of the 16S rRNA. Functionally, forms an intersubunit bridge (bridge B4) with the 23S rRNA of the 50S subunit in the ribosome. The sequence is that of Small ribosomal subunit protein uS15 from Trichodesmium erythraeum (strain IMS101).